A 696-amino-acid chain; its full sequence is Elongation factor G (696 aa).

A tr-type G domain is found at 8-282 (KDYRNIGIMA…AVVDYLPSPL (275 aa)). Residues 17 to 24 (AHIDAGKT), 81 to 85 (DTPGH), and 135 to 138 (NKMD) each bind GTP.

The protein belongs to the TRAFAC class translation factor GTPase superfamily. Classic translation factor GTPase family. EF-G/EF-2 subfamily.

It is found in the cytoplasm. Its function is as follows. Catalyzes the GTP-dependent ribosomal translocation step during translation elongation. During this step, the ribosome changes from the pre-translocational (PRE) to the post-translocational (POST) state as the newly formed A-site-bound peptidyl-tRNA and P-site-bound deacylated tRNA move to the P and E sites, respectively. Catalyzes the coordinated movement of the two tRNA molecules, the mRNA and conformational changes in the ribosome. This is Elongation factor G from Mycoplasmopsis synoviae (strain 53) (Mycoplasma synoviae).